A 254-amino-acid polypeptide reads, in one-letter code: 3-deoxy-manno-octulosonate cytidylyltransferase (254 aa).

The protein belongs to the KdsB family.

Its subcellular location is the cytoplasm. The catalysed reaction is 3-deoxy-alpha-D-manno-oct-2-ulosonate + CTP = CMP-3-deoxy-beta-D-manno-octulosonate + diphosphate. The protein operates within nucleotide-sugar biosynthesis; CMP-3-deoxy-D-manno-octulosonate biosynthesis; CMP-3-deoxy-D-manno-octulosonate from 3-deoxy-D-manno-octulosonate and CTP: step 1/1. It functions in the pathway bacterial outer membrane biogenesis; lipopolysaccharide biosynthesis. In terms of biological role, activates KDO (a required 8-carbon sugar) for incorporation into bacterial lipopolysaccharide in Gram-negative bacteria. The protein is 3-deoxy-manno-octulosonate cytidylyltransferase of Tolumonas auensis (strain DSM 9187 / NBRC 110442 / TA 4).